The primary structure comprises 62 residues: Large ribosomal subunit protein bL35 (62 aa).

The disordered stretch occupies residues 31 to 62 (HLAQNKTTKQKRQSRKSAQMHSSDLKRFKALI). Residues 53-62 (SDLKRFKALI) are compositionally biased toward basic and acidic residues.

This sequence belongs to the bacterial ribosomal protein bL35 family.

This chain is Large ribosomal subunit protein bL35, found in Mycoplasmopsis agalactiae (strain NCTC 10123 / CIP 59.7 / PG2) (Mycoplasma agalactiae).